Here is a 1157-residue protein sequence, read N- to C-terminus: Cyclin-dependent kinase 12 (1157 aa).

Positions Ser-15 to His-540 are disordered. The segment covering Ser-18–Ala-32 has biased composition (acidic residues). Over residues Gly-55–Asp-76 the composition is skewed to basic and acidic residues. Over residues Ser-85–Thr-94 the composition is skewed to polar residues. A Phosphothreonine modification is found at Thr-106. Basic residues predominate over residues Arg-134–Lys-162. Over residues Ser-163–Asn-176 the composition is skewed to low complexity. Residue Thr-184 is modified to Phosphothreonine. The span at Pro-189–Pro-215 shows a compositional bias: polar residues. Phosphoserine is present on residues Ser-190 and Ser-192. Thr-217 carries the phosphothreonine modification. The span at Pro-224–Gln-255 shows a compositional bias: polar residues. The span at Ser-256 to Pro-281 shows a compositional bias: low complexity. Ser-280 carries the post-translational modification Phosphoserine. Thr-283 bears the Phosphothreonine mark. Phosphoserine occurs at positions 291, 301, and 314. Residues Pro-315–Tyr-332 show a composition bias toward basic and acidic residues. Ser-353 is subject to Phosphoserine. Residue Thr-365 is modified to Phosphothreonine. A compositionally biased stretch (basic and acidic residues) spans Gly-392–Ser-403. A compositionally biased stretch (low complexity) spans Arg-408 to Ser-422. Positions Thr-444 to Asp-468 are enriched in polar residues. Residues Ser-473–Ser-484 show a composition bias toward low complexity. Residues Ser-487 and Ser-492 each carry the phosphoserine modification. Residues His-495–Arg-508 show a composition bias toward basic residues. Over residues Pro-518–Pro-533 the composition is skewed to low complexity. Ser-553 carries the phosphoserine modification. Disordered regions lie at residues Glu-574 to Pro-661 and Pro-675 to Val-782. The segment covering Gly-586–Asn-603 has biased composition (polar residues). Residues Ser-609 to Ser-623 are compositionally biased toward low complexity. 2 stretches are compositionally biased toward polar residues: residues Asn-644–Ser-656 and Val-721–Val-731. Phosphoserine occurs at positions 730, 743, 747, and 755. The span at Leu-746 to Asp-760 shows a compositional bias: acidic residues. The Protein kinase domain occupies Phe-804–Leu-1098. Residues Ile-810–Val-818, Lys-833, and Glu-891–Asp-896 contribute to the ATP site. Asp-936 functions as the Proton acceptor in the catalytic mechanism. His-1118 serves as a coordination point for ATP.

The protein belongs to the protein kinase superfamily. CMGC Ser/Thr protein kinase family. CDC2/CDKX subfamily. Interacts with cyclin CycK.

It localises to the nucleus. The protein localises to the chromosome. It catalyses the reaction [DNA-directed RNA polymerase] + ATP = phospho-[DNA-directed RNA polymerase] + ADP + H(+). The catalysed reaction is L-seryl-[protein] + ATP = O-phospho-L-seryl-[protein] + ADP + H(+). The enzyme catalyses L-threonyl-[protein] + ATP = O-phospho-L-threonyl-[protein] + ADP + H(+). Functionally, cyclin-dependent kinase which displays CTD kinase activity: hyperphosphorylates the C-terminal heptapeptide repeat domain (CTD) of the largest RNA polymerase II subunit, thereby acting as a key regulator of transcription elongation. The chain is Cyclin-dependent kinase 12 (Cdk12) from Drosophila melanogaster (Fruit fly).